Consider the following 267-residue polypeptide: Cytochrome b (267 aa).

4 helical membrane-spanning segments follow: residues 33–53, 77–98, 113–133, and 178–198; these read FGSL…FLAM, WLIR…FIHV, WNIG…GYVL, and FFAF…VHLL. 2 residues coordinate heme b: histidine 83 and histidine 97. Histidine 182 and histidine 196 together coordinate heme b. Histidine 201 lines the a ubiquinone pocket. Residues 226-246 form a helical membrane-spanning segment; it reads IKDLLGVILLLMVLMILVLFF.

It belongs to the cytochrome b family. As to quaternary structure, the cytochrome bc1 complex contains 11 subunits: 3 respiratory subunits (MT-CYB, CYC1 and UQCRFS1), 2 core proteins (UQCRC1 and UQCRC2) and 6 low-molecular weight proteins (UQCRH/QCR6, UQCRB/QCR7, UQCRQ/QCR8, UQCR10/QCR9, UQCR11/QCR10 and a cleavage product of UQCRFS1). This cytochrome bc1 complex then forms a dimer. The cofactor is heme b.

It localises to the mitochondrion inner membrane. Component of the ubiquinol-cytochrome c reductase complex (complex III or cytochrome b-c1 complex) that is part of the mitochondrial respiratory chain. The b-c1 complex mediates electron transfer from ubiquinol to cytochrome c. Contributes to the generation of a proton gradient across the mitochondrial membrane that is then used for ATP synthesis. This chain is Cytochrome b (MT-CYB), found in Abrothrix olivaceus (Olive grass mouse).